Reading from the N-terminus, the 325-residue chain is Lipoyl synthase (325 aa).

Residues 1 to 31 (MASDSDLLDTKPAETRHPEKAHRPDQPTLRK) form a disordered region. Over residues 8–31 (LDTKPAETRHPEKAHRPDQPTLRK) the composition is skewed to basic and acidic residues. [4Fe-4S] cluster contacts are provided by Cys-61, Cys-66, Cys-72, Cys-87, Cys-91, Cys-94, and Ser-300. The region spanning 73–289 (WAKKHATFMI…AEIGRAKGFL (217 aa)) is the Radical SAM core domain.

It belongs to the radical SAM superfamily. Lipoyl synthase family. [4Fe-4S] cluster is required as a cofactor.

Its subcellular location is the cytoplasm. It catalyses the reaction [[Fe-S] cluster scaffold protein carrying a second [4Fe-4S](2+) cluster] + N(6)-octanoyl-L-lysyl-[protein] + 2 oxidized [2Fe-2S]-[ferredoxin] + 2 S-adenosyl-L-methionine + 4 H(+) = [[Fe-S] cluster scaffold protein] + N(6)-[(R)-dihydrolipoyl]-L-lysyl-[protein] + 4 Fe(3+) + 2 hydrogen sulfide + 2 5'-deoxyadenosine + 2 L-methionine + 2 reduced [2Fe-2S]-[ferredoxin]. The protein operates within protein modification; protein lipoylation via endogenous pathway; protein N(6)-(lipoyl)lysine from octanoyl-[acyl-carrier-protein]: step 2/2. Functionally, catalyzes the radical-mediated insertion of two sulfur atoms into the C-6 and C-8 positions of the octanoyl moiety bound to the lipoyl domains of lipoate-dependent enzymes, thereby converting the octanoylated domains into lipoylated derivatives. This Methylocella silvestris (strain DSM 15510 / CIP 108128 / LMG 27833 / NCIMB 13906 / BL2) protein is Lipoyl synthase.